Reading from the N-terminus, the 509-residue chain is Surface lipoprotein assembly modifier (509 aa).

The first 32 residues, 1–32 (MNLMINLKPLTFLPFFGRLVFLSGVIYNTAWA), serve as a signal peptide directing secretion. Residues 33-204 (NTVIPVDNSR…SYIDTINQRD (172 aa)) form an N-terminal domain region. The tract at residues 43 to 72 (PDETFSQTSPKQHLFSQKPKPTEPTSSASS) is disordered. Residues 46–57 (TFSQTSPKQHLF) are compositionally biased toward polar residues. The TPR repeat unit spans residues 120–153 (FLLKWAQAVVARKQGKLNESVRLYRQIIAEKPNL). Residues 205–509 (SWNVYGGVNY…RIYLTFSKTF (305 aa)) are C-terminal probable beta barrel. The next 14 membrane-spanning stretches (beta stranded) occupy residues 206-216 (WNVYGGVNYLH), 245-256 (LSYFINLSKNWS), 261-270 (FFTEFSADIN), 284-294 (STRLNLGGGYR), 298-308 (TEVKLMPFVEQ), 331-341 (SGINLDVDYWL), 345-355 (WKISTVLEYTE), 371-381 (YSISNTLIYMP), 386-395 (FWFVGLDYYQ), 408-417 (QGIRLGWGQE), 423-432 (STRLQTSYAT), 461-470 (GVNFTIWHRS), 476-485 (ITPKITWAYQ), and 499-509 (NRIYLTFSKTF).

It belongs to the Slam family.

The protein resides in the cell outer membrane. Functionally, required for correct export to the cell surface of some cell outer membrane lipoproteins (tested with PM1514) upon heterologous expression in E.coli and probably also in Pasteurella. The protein is Surface lipoprotein assembly modifier of Pasteurella multocida (strain Pm70).